We begin with the raw amino-acid sequence, 253 residues long: Putative tyrosine-protein phosphatase OCA1 (253 aa).

Positions methionine 1 to glutamine 21 are enriched in basic and acidic residues. The segment at methionine 1–proline 84 is disordered. Residues serine 27–alanine 65 are compositionally biased toward polar residues. Residues asparagine 93–glutamate 249 form the Tyrosine-protein phosphatase domain. Cysteine 186 functions as the Phosphocysteine intermediate in the catalytic mechanism.

The protein belongs to the protein-tyrosine phosphatase family.

The protein localises to the cytoplasm. It carries out the reaction O-phospho-L-tyrosyl-[protein] + H2O = L-tyrosyl-[protein] + phosphate. Functionally, putative tyrosine-protein phosphatase required for protection against superoxide stress. This Yarrowia lipolytica (strain CLIB 122 / E 150) (Yeast) protein is Putative tyrosine-protein phosphatase OCA1 (OCA1).